Consider the following 486-residue polypeptide: Betaine aldehyde dehydrogenase (486 aa).

Residues T23 and D90 each contribute to the K(+) site. NAD(+) is bound at residue 147 to 149; sequence GAW. The active-site Charge relay system is the K159. Residues 173–176 and 226–229 each bind NAD(+); these read KPSE and ESGT. L241 is a binding site for K(+). E247 serves as the catalytic Proton acceptor. NAD(+) contacts are provided by G249, C281, and E382. The active-site Nucleophile is C281. C281 is subject to Cysteine sulfenic acid (-SOH). K(+)-binding residues include K452 and G455. The active-site Charge relay system is E459.

This sequence belongs to the aldehyde dehydrogenase family. Dimer of dimers. The cofactor is K(+).

It carries out the reaction betaine aldehyde + NAD(+) + H2O = glycine betaine + NADH + 2 H(+). Its pathway is amine and polyamine biosynthesis; betaine biosynthesis via choline pathway; betaine from betaine aldehyde: step 1/1. In terms of biological role, involved in the biosynthesis of the osmoprotectant glycine betaine. Catalyzes the irreversible oxidation of betaine aldehyde to the corresponding acid. The sequence is that of Betaine aldehyde dehydrogenase from Vibrio vulnificus (strain YJ016).